Consider the following 921-residue polypeptide: Translation initiation factor IF-2 (921 aa).

The interval 1-296 is disordered; sequence MADQNTPGDK…PGPQKQRGRL (296 aa). Low complexity predominate over residues 80-89; the sequence is RPSGPRPSGG. A compositionally biased stretch (basic and acidic residues) spans 117–183; sequence ARVRDLEERR…AKKRFGEGEA (67 aa). Composition is skewed to low complexity over residues 184–237 and 248–257; these read PRPA…ARPA and GRAPAAVAAG. In terms of domain architecture, tr-type G spans 417–586; that stretch reads PRSPVVTVMG…MIALQADILD (170 aa). Positions 426 to 433 are G1; it reads GHVDHGKT. 426–433 is a GTP binding site; that stretch reads GHVDHGKT. Residues 451–455 are G2; it reads GITQH. Residues 474–477 form a G3 region; that stretch reads DTPG. Residues 474-478 and 528-531 each bind GTP; these read DTPGH and NKID. Residues 528–531 are G4; sequence NKID. A G5 region spans residues 564-566; it reads SAK.

The protein belongs to the TRAFAC class translation factor GTPase superfamily. Classic translation factor GTPase family. IF-2 subfamily.

The protein resides in the cytoplasm. Functionally, one of the essential components for the initiation of protein synthesis. Protects formylmethionyl-tRNA from spontaneous hydrolysis and promotes its binding to the 30S ribosomal subunits. Also involved in the hydrolysis of GTP during the formation of the 70S ribosomal complex. This Bradyrhizobium sp. (strain ORS 278) protein is Translation initiation factor IF-2.